Here is a 399-residue protein sequence, read N- to C-terminus: Odorant receptor 42b (399 aa).

Over Met1–Tyr45 the chain is Cytoplasmic. Residues Leu46–Gly66 traverse the membrane as a helical segment. Topologically, residues Ser67–Ser83 are extracellular. A helical membrane pass occupies residues Leu84–Leu104. Residues Trp105–Ala140 lie on the Cytoplasmic side of the membrane. The helical transmembrane segment at Phe141–Leu161 threads the bilayer. The Extracellular portion of the chain corresponds to Ser162–Asp178. A helical membrane pass occupies residues Gly179–Leu199. Residues Gln200 to Thr268 are Cytoplasmic-facing. A helical transmembrane segment spans residues Ile269 to Phe289. Residues Phe290–Asp292 are Extracellular-facing. A helical transmembrane segment spans residues Ile293–Phe313. Over Cys314–Gln356 the chain is Cytoplasmic. A helical transmembrane segment spans residues Pro357 to Ala377. Residues Lys378–Asp399 lie on the Extracellular side of the membrane.

Belongs to the insect chemoreceptor superfamily. Heteromeric odorant receptor channel (TC 1.A.69) family. Or2a subfamily. In terms of assembly, interacts with Orco. Complexes exist early in the endomembrane system in olfactory sensory neurons (OSNs), coupling these complexes to the conserved ciliary trafficking pathway. In terms of tissue distribution, expressed in olfactory sensory neurons in the antenna.

The protein resides in the cell membrane. In terms of biological role, odorant receptor which mediates acceptance or avoidance behavior, depending on its substrates. The odorant receptor repertoire encodes a large collection of odor stimuli that vary widely in identity, intensity, and duration. May form a complex with Orco to form odorant-sensing units, providing sensitive and prolonged odorant signaling and calcium permeability. Involved in the behavioral responses to ethyl acetate and pentyl acetate. This is Odorant receptor 42b (Or42b) from Drosophila melanogaster (Fruit fly).